The following is a 336-amino-acid chain: Probable allantoicase (336 aa).

The protein belongs to the allantoicase family.

The catalysed reaction is allantoate + H2O = (S)-ureidoglycolate + urea. The protein operates within nitrogen metabolism; (S)-allantoin degradation; (S)-ureidoglycolate from allantoate (aminidohydrolase route): step 1/1. The chain is Probable allantoicase from Acinetobacter baumannii (strain SDF).